A 371-amino-acid chain; its full sequence is Probable endolytic peptidoglycan transglycosylase RlpA (371 aa).

Positions 1-25 (MNQRHLWTIVALSVTVLGTPAVGRT) are cleaved as a signal peptide. Residues 177-191 (LVASQSQNKSSSSQQ) show a composition bias toward low complexity. The tract at residues 177 to 196 (LVASQSQNKSSSSQQKSERY) is disordered.

It belongs to the RlpA family.

Its function is as follows. Lytic transglycosylase with a strong preference for naked glycan strands that lack stem peptides. This Nostoc sp. (strain PCC 7120 / SAG 25.82 / UTEX 2576) protein is Probable endolytic peptidoglycan transglycosylase RlpA.